Here is a 314-residue protein sequence, read N- to C-terminus: tRNA dimethylallyltransferase (314 aa).

Positions 1–25 (MAEEPQRSPAPTSPFAFTVPSNSLS) are disordered. 40–47 (GPTASGKS) serves as a coordination point for ATP. A substrate-binding site is contributed by 42 to 47 (TASGKS).

The protein belongs to the IPP transferase family. In terms of assembly, monomer. Mg(2+) serves as cofactor.

The catalysed reaction is adenosine(37) in tRNA + dimethylallyl diphosphate = N(6)-dimethylallyladenosine(37) in tRNA + diphosphate. Its function is as follows. Catalyzes the transfer of a dimethylallyl group onto the adenine at position 37 in tRNAs that read codons beginning with uridine, leading to the formation of N6-(dimethylallyl)adenosine (i(6)A). This Cereibacter sphaeroides (strain ATCC 17023 / DSM 158 / JCM 6121 / CCUG 31486 / LMG 2827 / NBRC 12203 / NCIMB 8253 / ATH 2.4.1.) (Rhodobacter sphaeroides) protein is tRNA dimethylallyltransferase.